A 311-amino-acid chain; its full sequence is Porphobilinogen deaminase (311 aa).

C242 carries the S-(dipyrrolylmethanemethyl)cysteine modification.

Belongs to the HMBS family. Monomer. The cofactor is dipyrromethane.

The catalysed reaction is 4 porphobilinogen + H2O = hydroxymethylbilane + 4 NH4(+). It functions in the pathway porphyrin-containing compound metabolism; protoporphyrin-IX biosynthesis; coproporphyrinogen-III from 5-aminolevulinate: step 2/4. In terms of biological role, tetrapolymerization of the monopyrrole PBG into the hydroxymethylbilane pre-uroporphyrinogen in several discrete steps. The chain is Porphobilinogen deaminase from Baumannia cicadellinicola subsp. Homalodisca coagulata.